The chain runs to 446 residues: Calcium-binding and coiled-coil domain-containing protein 2 (446 aa).

The CLIR signature appears at isoleucine 133–valine 136. Positions threonine 137–methionine 349 form a coiled coil. Positions aspartate 203–glutamate 206 match the LIR-like motif. The interaction with LGALS8 stretch occupies residues asparagine 371–serine 381. The interval lysine 395 to leucine 446 is interaction with MYO6. The UBZ1-type zinc-finger motif lies at cysteine 419–histidine 444. The Zn(2+) site is built by cysteine 422, cysteine 425, histidine 440, and histidine 444. Residue serine 445 is modified to Phosphoserine.

Belongs to the CALCOCO family. In terms of assembly, dimer. Part of a complex consisting of CALCOCO2, TAX1BP1 and MYO6. Interacts with MYO6. Interacts with GEMIN4. Interacts with ATG8 family members MAP1LC3A, MAP1LC3B, GABARAP, GABARAPL1 and GABARAPL2. Interacts with ATG8 family member MAP1LC3C. Interacts with LGALS8. Interacts with TOM1; the interaction is indirect and is mediated by MYO6, which acts as a bridge between TOM1 and CALCOCO2. Interacts with AZI2.

The protein localises to the cytoplasm. It localises to the perinuclear region. Its subcellular location is the cytoskeleton. The protein resides in the cytoplasmic vesicle. It is found in the autophagosome membrane. Xenophagy-specific receptor required for autophagy-mediated intracellular bacteria degradation. Acts as an effector protein of galectin-sensed membrane damage that restricts the proliferation of infecting pathogens upon entry into the cytosol by targeting LGALS8-associated bacteria for autophagy. Initially orchestrates bacteria targeting to autophagosomes and subsequently ensures pathogen degradation by regulating pathogen-containing autophagosome maturation. Bacteria targeting to autophagosomes relies on its interaction with MAP1LC3A, MAP1LC3B and/or GABARAPL2, whereas regulation of pathogen-containing autophagosome maturation requires the interaction with MAP3LC3C. May play a role in ruffle formation and actin cytoskeleton organization and seems to negatively regulate constitutive secretion. The protein is Calcium-binding and coiled-coil domain-containing protein 2 of Pongo abelii (Sumatran orangutan).